Consider the following 1141-residue polypeptide: Isoleucine--tRNA ligase (1141 aa).

A 'HIGH' region motif is present at residues 50-60; sequence PSANGMPGIHH. Positions 689-693 match the 'KMSKS' region motif; that stretch reads KMSKR. Residue lysine 692 coordinates ATP.

It belongs to the class-I aminoacyl-tRNA synthetase family. IleS type 2 subfamily. Monomer. It depends on Zn(2+) as a cofactor.

It is found in the cytoplasm. The enzyme catalyses tRNA(Ile) + L-isoleucine + ATP = L-isoleucyl-tRNA(Ile) + AMP + diphosphate. Its function is as follows. Catalyzes the attachment of isoleucine to tRNA(Ile). As IleRS can inadvertently accommodate and process structurally similar amino acids such as valine, to avoid such errors it has two additional distinct tRNA(Ile)-dependent editing activities. One activity is designated as 'pretransfer' editing and involves the hydrolysis of activated Val-AMP. The other activity is designated 'posttransfer' editing and involves deacylation of mischarged Val-tRNA(Ile). The sequence is that of Isoleucine--tRNA ligase from Bacteroides fragilis (strain ATCC 25285 / DSM 2151 / CCUG 4856 / JCM 11019 / LMG 10263 / NCTC 9343 / Onslow / VPI 2553 / EN-2).